The chain runs to 395 residues: MWGLCKNHFPSNKIQVQERNKALKPKKSGSEHKTKQLFPVFNCKKKEKGVMIRFAILRNANTSLLSARSICLFTQAPTYCHVRLNTLNKSITTKRNSLTESKRHVHDGKHFFTTPHQQQQTKLGEIEEGHSPNIKGEDLRSIGQAITHQRNKRRKQIWSAIFGGIFGVILGYSLIYRVIYLKEQSFLPLFPSSKIRKLSSRDLKKVDVNQVQKLSKLRVLEILSGHDMIKEQYGVPLLDKDGNSPTLNEFSMWCEDQDPCVTGIVMEPDDKRDSSHTWYRIPFVCKWRITHRPISIRGTIDDLLNRIGLETSDLFEIISPERVYGSFKYEYPLQGDSHALHLWFHGEIELDDDSLIVYNGKYHVDVKLQEIDLFRREKNGQLVQYVLYKNEAGDK.

Residues 156-176 (QIWSAIFGGIFGVILGYSLIY) traverse the membrane as a helical segment.

This sequence belongs to the AIM39 family.

It localises to the mitochondrion membrane. This Saccharomyces cerevisiae (strain JAY291) (Baker's yeast) protein is Altered inheritance of mitochondria protein 39, mitochondrial (AIM39).